The sequence spans 188 residues: dCTP deaminase (188 aa).

DCTP is bound by residues 111-116 (KSTYAR), 135-137 (TLE), Gln156, Tyr170, Lys179, and Gln180. Glu137 functions as the Proton donor/acceptor in the catalytic mechanism.

The protein belongs to the dCTP deaminase family. In terms of assembly, homotrimer.

The enzyme catalyses dCTP + H2O + H(+) = dUTP + NH4(+). It participates in pyrimidine metabolism; dUMP biosynthesis; dUMP from dCTP (dUTP route): step 1/2. Catalyzes the deamination of dCTP to dUTP. This chain is dCTP deaminase, found in Rickettsia felis (strain ATCC VR-1525 / URRWXCal2) (Rickettsia azadi).